Reading from the N-terminus, the 345-residue chain is Beta-2-glycoprotein 1 (345 aa).

The N-terminal stretch at 1-19 (MISPVLILFSSFLCHVAIA) is a signal peptide. 4 Sushi domains span residues 21–81 (RTCP…KCTP), 82–139 (RVCP…VCAP), 140–202 (ITCP…ECRE), and 203–262 (VKCP…SCKA). 11 cysteine pairs are disulfide-bonded: cysteine 23–cysteine 66, cysteine 51–cysteine 79, cysteine 84–cysteine 124, cysteine 110–cysteine 137, cysteine 142–cysteine 188, cysteine 174–cysteine 200, cysteine 205–cysteine 248, cysteine 234–cysteine 260, cysteine 264–cysteine 315, cysteine 300–cysteine 325, and cysteine 307–cysteine 345. O-linked (GalNAc...) threonine glycosylation is present at threonine 33. A glycan (O-linked (GalNAc...) threonine) is linked at threonine 149. N-linked (GlcNAc...) asparagine glycans are attached at residues asparagine 162, asparagine 183, and asparagine 193. N-linked (GlcNAc...) asparagine glycosylation is present at asparagine 253. The interval 263–345 (SCKVPVKKAT…KTDASDVKPC (83 aa)) is sushi-like.

As to expression, expressed by the liver and secreted in plasma.

The protein resides in the secreted. Its function is as follows. Binds to various kinds of negatively charged substances such as heparin, phospholipids, and dextran sulfate. May prevent activation of the intrinsic blood coagulation cascade by binding to phospholipids on the surface of damaged cells. This is Beta-2-glycoprotein 1 (APOH) from Pan troglodytes (Chimpanzee).